A 548-amino-acid chain; its full sequence is Membrane protein insertase YidC (548 aa).

A helical membrane pass occupies residues 6–26 (NLLVIALLFVSFMIWQAWEQD). Residues 28–56 (NPQPQTQQTTQTTTTAAGSAADQGVPASG) are disordered. Over residues 29–42 (PQPQTQQTTQTTTT) the composition is skewed to low complexity. Transmembrane regions (helical) follow at residues 350 to 370 (FVGN…GIMY), 424 to 444 (FPLI…MGSI), 458 to 478 (LSAQ…MFFI), and 499 to 519 (PVIF…YYIV).

The protein belongs to the OXA1/ALB3/YidC family. Type 1 subfamily. In terms of assembly, interacts with the Sec translocase complex via SecD. Specifically interacts with transmembrane segments of nascent integral membrane proteins during membrane integration.

The protein resides in the cell inner membrane. Its function is as follows. Required for the insertion and/or proper folding and/or complex formation of integral membrane proteins into the membrane. Involved in integration of membrane proteins that insert both dependently and independently of the Sec translocase complex, as well as at least some lipoproteins. Aids folding of multispanning membrane proteins. The protein is Membrane protein insertase YidC of Salmonella enteritidis PT4 (strain P125109).